We begin with the raw amino-acid sequence, 288 residues long: Homoserine kinase (288 aa).

Residue 79–89 coordinates ATP; that stretch reads PPARGLGSSSA.

The protein belongs to the GHMP kinase family. Homoserine kinase subfamily.

The protein resides in the cytoplasm. The catalysed reaction is L-homoserine + ATP = O-phospho-L-homoserine + ADP + H(+). It participates in amino-acid biosynthesis; L-threonine biosynthesis; L-threonine from L-aspartate: step 4/5. In terms of biological role, catalyzes the ATP-dependent phosphorylation of L-homoserine to L-homoserine phosphate. The chain is Homoserine kinase from Listeria welshimeri serovar 6b (strain ATCC 35897 / DSM 20650 / CCUG 15529 / CIP 8149 / NCTC 11857 / SLCC 5334 / V8).